The sequence spans 581 residues: Cytosolic Fe-S cluster assembly factor nar-1 (581 aa).

[4Fe-4S] cluster is bound by residues Cys-20, Cys-68, Cys-71, Cys-74, Cys-215, Cys-270, Cys-457, and Cys-461.

The protein belongs to the NARF family.

In terms of biological role, component of the cytosolic Fe/S protein assembly machinery. Required for maturation of extramitochondrial Fe/S proteins. May play a role in the transfer of pre-assembled Fe/S clusters to target apoproteins. In Neurospora crassa (strain ATCC 24698 / 74-OR23-1A / CBS 708.71 / DSM 1257 / FGSC 987), this protein is Cytosolic Fe-S cluster assembly factor nar-1 (nar-1).